A 29-amino-acid polypeptide reads, in one-letter code: RICPRILMECKADSDCLAQCICQENGFCG.

3 disulfides stabilise this stretch: Cys-3–Cys-20, Cys-10–Cys-22, and Cys-16–Cys-28.

The protein belongs to the protease inhibitor I7 (squash-type serine protease inhibitor) family.

It localises to the secreted. In terms of biological role, strongly inhibits trypsin, weakly inhibits chymotrypsin. The sequence is that of Trypsin inhibitor 4 from Cyclanthera pedata (Achocha).